A 317-amino-acid chain; its full sequence is Ribosomal RNA small subunit methyltransferase H (317 aa).

S-adenosyl-L-methionine contacts are provided by residues 39–41 (GGH), aspartate 59, phenylalanine 83, aspartate 104, and glutamine 111.

Belongs to the methyltransferase superfamily. RsmH family.

It is found in the cytoplasm. The catalysed reaction is cytidine(1402) in 16S rRNA + S-adenosyl-L-methionine = N(4)-methylcytidine(1402) in 16S rRNA + S-adenosyl-L-homocysteine + H(+). Its function is as follows. Specifically methylates the N4 position of cytidine in position 1402 (C1402) of 16S rRNA. The protein is Ribosomal RNA small subunit methyltransferase H of Paraburkholderia xenovorans (strain LB400).